We begin with the raw amino-acid sequence, 129 residues long: Glycine cleavage system H protein (129 aa).

The Lipoyl-binding domain occupies 24–106 (LVRVGISAFA…HGEGWLLVVR (83 aa)). Lys-65 is subject to N6-lipoyllysine.

It belongs to the GcvH family. In terms of assembly, the glycine cleavage system is composed of four proteins: P, T, L and H. Requires (R)-lipoate as cofactor.

In terms of biological role, the glycine cleavage system catalyzes the degradation of glycine. The H protein shuttles the methylamine group of glycine from the P protein to the T protein. The sequence is that of Glycine cleavage system H protein from Prochlorococcus marinus (strain MIT 9303).